The chain runs to 79 residues: Acyl carrier protein (79 aa).

The Carrier domain maps to 2–77; sequence SDVLERVRKI…DAVKFIQERL (76 aa). Position 37 is an O-(pantetheine 4'-phosphoryl)serine (serine 37).

It belongs to the acyl carrier protein (ACP) family. Post-translationally, 4'-phosphopantetheine is transferred from CoA to a specific serine of apo-ACP by AcpS. This modification is essential for activity because fatty acids are bound in thioester linkage to the sulfhydryl of the prosthetic group.

It is found in the cytoplasm. It functions in the pathway lipid metabolism; fatty acid biosynthesis. Functionally, carrier of the growing fatty acid chain in fatty acid biosynthesis. This Phenylobacterium zucineum (strain HLK1) protein is Acyl carrier protein.